The chain runs to 441 residues: Amino-acid acetyltransferase (441 aa).

An N-acetyltransferase domain is found at 295-434 (EKVRGAGIDD…KALYNFQRRS (140 aa)).

Belongs to the acetyltransferase family. ArgA subfamily.

It is found in the cytoplasm. The enzyme catalyses L-glutamate + acetyl-CoA = N-acetyl-L-glutamate + CoA + H(+). The protein operates within amino-acid biosynthesis; L-arginine biosynthesis; N(2)-acetyl-L-ornithine from L-glutamate: step 1/4. The polypeptide is Amino-acid acetyltransferase (Photobacterium profundum (strain SS9)).